A 159-amino-acid polypeptide reads, in one-letter code: NADH-quinone oxidoreductase subunit B (159 aa).

[4Fe-4S] cluster contacts are provided by Cys-32, Cys-33, Cys-97, and Cys-126.

Belongs to the complex I 20 kDa subunit family. NDH-1 is composed of 14 different subunits. Subunits NuoB, C, D, E, F, and G constitute the peripheral sector of the complex. It depends on [4Fe-4S] cluster as a cofactor.

It is found in the cell inner membrane. It carries out the reaction a quinone + NADH + 5 H(+)(in) = a quinol + NAD(+) + 4 H(+)(out). Functionally, NDH-1 shuttles electrons from NADH, via FMN and iron-sulfur (Fe-S) centers, to quinones in the respiratory chain. The immediate electron acceptor for the enzyme in this species is believed to be ubiquinone. Couples the redox reaction to proton translocation (for every two electrons transferred, four hydrogen ions are translocated across the cytoplasmic membrane), and thus conserves the redox energy in a proton gradient. The chain is NADH-quinone oxidoreductase subunit B from Helicobacter acinonychis (strain Sheeba).